The chain runs to 180 residues: ATP-dependent protease subunit HslV (180 aa).

Threonine 8 is an active-site residue. Na(+) contacts are provided by glycine 165, cysteine 168, and threonine 171.

Belongs to the peptidase T1B family. HslV subfamily. A double ring-shaped homohexamer of HslV is capped on each side by a ring-shaped HslU homohexamer. The assembly of the HslU/HslV complex is dependent on binding of ATP.

It is found in the cytoplasm. It catalyses the reaction ATP-dependent cleavage of peptide bonds with broad specificity.. Its activity is regulated as follows. Allosterically activated by HslU binding. Protease subunit of a proteasome-like degradation complex believed to be a general protein degrading machinery. This Halalkalibacterium halodurans (strain ATCC BAA-125 / DSM 18197 / FERM 7344 / JCM 9153 / C-125) (Bacillus halodurans) protein is ATP-dependent protease subunit HslV.